Consider the following 284-residue polypeptide: MAWLRKKEQQSDPLTPWQQYQARQQQTPRHDRRQKPKLDVNLPKIQTLRRRKLVKNLVLILLPLLLLLGVFGYFASPLSKVGLVSVQGVTTVPDQQVINATKLSDDDLMLSVAFHKNAIAQRVQKSLPEIKTASLTIKGFNRIIIKTSEYQTVGYVYQKHAYHKILVTGEVLAAGTQTPVTTYPVFSGFTAKELPQMITLLKQFPAAIRRDISEIDASRGDANPNQIALNMNDGYRIIADTRTIAKKIKYYPAIVSQVKQKGVVDLEVGAFWRPYSSSEKSSND.

Residues 1–10 (MAWLRKKEQQ) are compositionally biased toward basic and acidic residues. The tract at residues 1–38 (MAWLRKKEQQSDPLTPWQQYQARQQQTPRHDRRQKPKL) is disordered. The Cytoplasmic portion of the chain corresponds to 1–56 (MAWLRKKEQQSDPLTPWQQYQARQQQTPRHDRRQKPKLDVNLPKIQTLRRRKLVKN). Residues 57-77 (LVLILLPLLLLLGVFGYFASP) traverse the membrane as a helical segment. Over 78–284 (LSKVGLVSVQ…YSSSEKSSND (207 aa)) the chain is Extracellular. The POTRA domain occupies 79 to 150 (SKVGLVSVQG…NRIIIKTSEY (72 aa)).

The protein belongs to the FtsQ/DivIB family. DivIB subfamily.

Its subcellular location is the cell membrane. In terms of biological role, cell division protein that may be involved in stabilizing or promoting the assembly of the division complex. This Lacticaseibacillus rhamnosus (strain ATCC 53103 / LMG 18243 / GG) (Lactobacillus rhamnosus) protein is Cell division protein DivIB.